The following is an 89-amino-acid chain: Large ribosomal subunit protein eL43 (89 aa).

The disordered stretch occupies residues 1-28; sequence MVKKSKVGSTGRFGARYGRKAKRTVKDI. The C4-type zinc-finger motif lies at 38–59; the sequence is CPKCDRPGVKRTHAGIWKCRKC.

This sequence belongs to the eukaryotic ribosomal protein eL43 family. Requires Zn(2+) as cofactor.

The chain is Large ribosomal subunit protein eL43 from Methanosphaera stadtmanae (strain ATCC 43021 / DSM 3091 / JCM 11832 / MCB-3).